A 513-amino-acid chain; its full sequence is GMP synthase [glutamine-hydrolyzing] (513 aa).

The Glutamine amidotransferase type-1 domain occupies 9 to 198; that stretch reads LILVLDFGSQ…IREICKCTGE (190 aa). Cys-86 (nucleophile) is an active-site residue. Active-site residues include His-172 and Glu-174. The GMPS ATP-PPase domain occupies 199-388; sequence WTMENFIEIE…LGIPEHLVWR (190 aa). 226–232 provides a ligand contact to ATP; the sequence is SGGVDSS.

As to quaternary structure, homodimer.

It catalyses the reaction XMP + L-glutamine + ATP + H2O = GMP + L-glutamate + AMP + diphosphate + 2 H(+). Its pathway is purine metabolism; GMP biosynthesis; GMP from XMP (L-Gln route): step 1/1. Functionally, catalyzes the synthesis of GMP from XMP. The chain is GMP synthase [glutamine-hydrolyzing] from Macrococcus caseolyticus (strain JCSC5402) (Macrococcoides caseolyticum).